The following is an 80-amino-acid chain: Pre-core protein X (80 aa).

A propeptide spanning residues 2 to 32 (ALTCRLRFPVPGFRGRMHRRRGMAGHGLTGG) is cleaved from the precursor. The disordered stretch occupies residues 18–45 (MHRRRGMAGHGLTGGMRRAHHRRRRASH). Residues 34–45 (RRAHHRRRRASH) are compositionally biased toward basic residues. The propeptide occupies 52 to 80 (ILPLLIPLIAAAIGAVPGIASVALQAQRH).

This sequence belongs to the adenoviridae core protein X family. In terms of assembly, interacts with the core-capsid bridging protein; this interaction bridges the virus core to the capsid. Cleaved by the viral protease during virion maturation to form the mature protein.

The protein localises to the host nucleus. It localises to the host nucleolus. It is found in the virion. Its function is as follows. Interacts with the viral DNA and aids in tightly condensing it within the capsid. Cleavage of pre-core protein X may serve to partially relax this structure within the mature virion prior to its entry into the nucleus. This Human adenovirus C serotype 2 (HAdV-2) protein is Pre-core protein X.